The primary structure comprises 191 residues: Rubrerythrin (191 aa).

One can recognise a Ferritin-like diiron domain in the interval 1 to 146; sequence MKSLKGSRTE…DFARNIKEGR (146 aa). Glutamate 20, glutamate 53, glutamate 94, glutamate 97, glutamate 128, histidine 131, cysteine 158, cysteine 161, cysteine 174, and cysteine 177 together coordinate Fe(3+). Residues 153–191 form the Rubredoxin-like domain; the sequence is ATKWRCRNCGYVHEGTGAPELCPACAHPKAHFELLGINW.

As to quaternary structure, homodimer. Possesses two rubredoxin-like centers and two non-sulfur oxo-bridged di-iron centers per dimer. Fe(3+) is required as a cofactor.

It localises to the cytoplasm. Its function is as follows. May provide oxidative stress protection via catalytic reduction of intracellular hydrogen peroxide. This chain is Rubrerythrin (rbr), found in Nitratidesulfovibrio vulgaris (strain ATCC 29579 / DSM 644 / CCUG 34227 / NCIMB 8303 / VKM B-1760 / Hildenborough) (Desulfovibrio vulgaris).